A 917-amino-acid polypeptide reads, in one-letter code: Transcriptional regulatory protein SEF1 (917 aa).

The segment at 1–88 (MKFEKGKVRI…SKPTGHRPVT (88 aa)) is disordered. The segment covering 13–27 (KPSPTPTNPQTPLPL) has biased composition (pro residues). Positions 56–70 (SNSTASTPNSATPTS) are enriched in low complexity. The segment covering 71–81 (VGTPPQKTSKP) has biased composition (polar residues). The segment at residues 90-120 (CTFCRQHKIKCNASDNYPNPCERCKKMGLKC) is a DNA-binding region (zn(2)-C6 fungal-type). Positions 129–164 (RKGSQIQSLKSDVDELKAKIEMLTKNESLLTQALNQ) form a coiled coil. Disordered stretches follow at residues 168–212 (NHAS…ASPI) and 778–849 (QQYP…PFIL). Positions 171–184 (SQQQQSSGSQSQQQ) are enriched in low complexity. Residues 191–212 (RALSYTSANSSPQVAFSNASPI) are compositionally biased toward polar residues. A compositionally biased stretch (low complexity) spans 778–827 (QQYPMQQDQQQQEPSQQQQQKHSQQSQQYQQQQQSNQQQPHLQHQRQFQQ).

Interacts with SSN3 and SFU1. Phosphorylated by SSN3 under iron-depleted conditions which leads to nuclear localization.

The protein resides in the cytoplasm. The protein localises to the nucleus. Transcription factor which plays an essential role in virulence by activating the transcription of iron uptake genes such as FRE7 in iron-poor environments such as the host bloodstream and internal organs. Promotes commensalism in a mouse model of gastrointestinal infection. This is Transcriptional regulatory protein SEF1 (SEF1) from Candida albicans (strain SC5314 / ATCC MYA-2876) (Yeast).